A 416-amino-acid polypeptide reads, in one-letter code: Putative competence-damage inducible protein (416 aa).

This sequence belongs to the CinA family.

This chain is Putative competence-damage inducible protein, found in Bacillus velezensis (strain DSM 23117 / BGSC 10A6 / LMG 26770 / FZB42) (Bacillus amyloliquefaciens subsp. plantarum).